The primary structure comprises 233 residues: Serine-rich 25 kDa antigen protein (233 aa).

Residues 35 to 219 (KNEASPEKLE…DNNNLDAASS (185 aa)) form a disordered region. Over residues 38–53 (ASPEKLEEAEEKEKSS) the composition is skewed to basic and acidic residues. Positions 61–71 (SNEDNEDDEDE) are enriched in acidic residues. 10 tandem repeats follow at residues 82-93 (SSSDKPDNKPEA), 102-113 (SSSDKPDNKPEA), 114-125 (SSSDKPDNKPEA), 126-137 (SSSDKPDNKPEA), 138-149 (SSSDKPDNKPEA), 150-161 (SSSDKPDNKPEA), 162-169 (SSTNKPEA), 170-177 (SSTNKPEA), 178-185 (SSTNKPEA), and 186-193 (SSTNKPEA). Residues 82 to 161 (SSSDKPDNKP…SDKPDNKPEA (80 aa)) form a 6 X 12 AA tandem repeats of S-S-S-D-K-P-D-N-K-P-E-A region. Residues 83–159 (SSDKPDNKPE…SSSDKPDNKP (77 aa)) are compositionally biased toward basic and acidic residues. The segment covering 160 to 192 (EASSTNKPEASSTNKPEASSTNKPEASSTNKPE) has biased composition (polar residues). The segment at 162-193 (SSTNKPEASSTNKPEASSTNKPEASSTNKPEA) is 4 X 8 AA tandem repeats of S-S-T-N-K-P-E-A. Over residues 193–219 (ASSTSNSNDKSGSSSDNDNNNLDAASS) the composition is skewed to low complexity.

Post-translationally, phosphorylated on serine residue(s). In terms of processing, O-glycosylated; glycans consist of single N-acetylglucosamine residues. O-acylated; acyl group is probably palmitate, not myristate.

The protein resides in the cell membrane. Its function is as follows. Plays a role in the adhesion to host cells. Involved in the adhesion to host apoptotic cells thereby facilitating their phagocytosis. This is Serine-rich 25 kDa antigen protein from Entamoeba histolytica (strain ATCC 30459 / HM-1:IMSS / ABRM).